The following is a 261-amino-acid chain: Pantothenate synthetase (261 aa).

29-36 (MGALHNGH) is an ATP binding site. The active-site Proton donor is the His36. Gln60 lines the (R)-pantoate pocket. Gln60 contributes to the beta-alanine binding site. Residue 147–150 (GEKD) participates in ATP binding. Gln153 is a binding site for (R)-pantoate. 184-187 (LSSR) is an ATP binding site.

It belongs to the pantothenate synthetase family. In terms of assembly, homodimer.

It is found in the cytoplasm. It carries out the reaction (R)-pantoate + beta-alanine + ATP = (R)-pantothenate + AMP + diphosphate + H(+). Its pathway is cofactor biosynthesis; (R)-pantothenate biosynthesis; (R)-pantothenate from (R)-pantoate and beta-alanine: step 1/1. Functionally, catalyzes the condensation of pantoate with beta-alanine in an ATP-dependent reaction via a pantoyl-adenylate intermediate. The protein is Pantothenate synthetase of Francisella tularensis subsp. mediasiatica (strain FSC147).